The primary structure comprises 830 residues: DNA replication licensing factor MCM6 (830 aa).

A C4-type zinc finger spans residues 159–186 (CLDCGNVVKNVEQQFKYTEPIICVNATC). One can recognise an MCM domain in the interval 349 to 555 (FFNKIVDSIC…NTDYHIAHHI (207 aa)). 399 to 406 (GDPSCAKS) lines the ATP pocket. An Arginine finger motif is present at residues 531 to 534 (SRFD). Positions 671–710 (DFQDADDGTNVPADNDAGQPTEMDAAPQQDGPENEQAADT) are disordered.

The protein belongs to the MCM family. In terms of assembly, component of the minichromosome maintenance (MCM) complex, a heterotetramer composed of MCM2, MCM3, MCM4, MCM5, MCM6 and MCM7.

Its subcellular location is the nucleus. It carries out the reaction ATP + H2O = ADP + phosphate + H(+). In terms of biological role, probable component of the MCM2-7 complex (MCM complex) that may function as a DNA helicase and which is essential to undergo a single round of replication initiation and elongation per cell cycle in eukaryotic cells. The chain is DNA replication licensing factor MCM6 (MCM6) from Oryza sativa subsp. indica (Rice).